We begin with the raw amino-acid sequence, 1413 residues long: DNA-directed RNA polymerase subunit beta' (1413 aa).

4 residues coordinate Zn(2+): Cys-70, Cys-72, Cys-85, and Cys-88. 3 residues coordinate Mg(2+): Asp-460, Asp-462, and Asp-464. Zn(2+)-binding residues include Cys-814, Cys-888, Cys-895, and Cys-898.

Belongs to the RNA polymerase beta' chain family. In terms of assembly, the RNAP catalytic core consists of 2 alpha, 1 beta, 1 beta' and 1 omega subunit. When a sigma factor is associated with the core the holoenzyme is formed, which can initiate transcription. Requires Mg(2+) as cofactor. Zn(2+) serves as cofactor.

The enzyme catalyses RNA(n) + a ribonucleoside 5'-triphosphate = RNA(n+1) + diphosphate. Its function is as follows. DNA-dependent RNA polymerase catalyzes the transcription of DNA into RNA using the four ribonucleoside triphosphates as substrates. The chain is DNA-directed RNA polymerase subunit beta' from Buchnera aphidicola subsp. Schizaphis graminum (strain Sg).